Reading from the N-terminus, the 152-residue chain is Small ribosomal subunit protein uS11B (152 aa).

Positions E131–L152 are disordered. Basic residues predominate over residues R143–L152.

It belongs to the universal ribosomal protein uS11 family.

The protein is Small ribosomal subunit protein uS11B of Anopheles gambiae (African malaria mosquito).